Consider the following 119-residue polypeptide: MKKKYRIKKNDDFQKVFRRGKSFANRQFVVYTLKQEGSTHFRIGLSVSKKIGNAVCRNRIKRYIRQSFHELESQINPENEYIIIARKPAANMDFHEVKKSLIHVLKVGRVLKQKPNNSK.

The protein belongs to the RnpA family. In terms of assembly, consists of a catalytic RNA component (M1 or rnpB) and a protein subunit.

The enzyme catalyses Endonucleolytic cleavage of RNA, removing 5'-extranucleotides from tRNA precursor.. In terms of biological role, RNaseP catalyzes the removal of the 5'-leader sequence from pre-tRNA to produce the mature 5'-terminus. It can also cleave other RNA substrates such as 4.5S RNA. The protein component plays an auxiliary but essential role in vivo by binding to the 5'-leader sequence and broadening the substrate specificity of the ribozyme. This chain is Ribonuclease P protein component, found in Listeria monocytogenes serotype 4a (strain HCC23).